The following is a 559-amino-acid chain: uncharacterized protein (559 aa).

2 disordered regions span residues 315–360 (TDDA…ERDI) and 454–559 (DKID…STEN). A compositionally biased stretch (polar residues) spans 320-329 (NENSDNSMNT). The segment covering 348–357 (DNNDDSDDSE) has biased composition (acidic residues). Residues 433–495 (ELKIQEMEKI…KRRQKRSQRS (63 aa)) adopt a coiled-coil conformation. Basic and acidic residues predominate over residues 454 to 501 (DKIDMDQIKSEMSRRRDESNKRRDEKRKDREEKRRQKRSQRSDTRKQG). Residues 507-527 (SDEATSDQTQSTDSNNTTQTA) show a composition bias toward low complexity.

Its subcellular location is the virion. This is an uncharacterized protein from Acanthamoeba polyphaga mimivirus (APMV).